Reading from the N-terminus, the 314-residue chain is Ecto-ADP-ribosyltransferase 4 (314 aa).

The signal sequence occupies residues 1–46 (MGPLINRCKKILLPTTVPPATMRIWLLGGLLPFLLLLSGLQRPTEG). 2 cysteine pairs are disulfide-bonded: Cys-69–Cys-280 and Cys-182–Cys-231. Residues 91–276 (KNYFRMWQKA…LQLRSTGNLS (186 aa)) form the TR mART core domain. Asn-114 carries N-linked (GlcNAc...) asparagine glycosylation. Tyr-126 contacts NAD(+). Asn-178 carries N-linked (GlcNAc...) asparagine glycosylation. Gln-206 provides a ligand contact to NAD(+). N-linked (GlcNAc...) asparagine glycosylation is present at Asn-222. Position 240 (Ser-240) interacts with NAD(+). N-linked (GlcNAc...) asparagine glycans are attached at residues Asn-257 and Asn-274. Ala-285 carries GPI-anchor amidated alanine lipidation. The propeptide at 286–314 (SSKKCIPDPIAIASLSFLTSVIIFSKSRV) is removed in mature form.

The protein belongs to the Arg-specific ADP-ribosyltransferase family. As to expression, expressed in spleen and T-cells.

The protein resides in the cell membrane. The catalysed reaction is L-arginyl-[protein] + NAD(+) = N(omega)-(ADP-D-ribosyl)-L-arginyl-[protein] + nicotinamide + H(+). This chain is Ecto-ADP-ribosyltransferase 4 (ART4), found in Homo sapiens (Human).